A 534-amino-acid chain; its full sequence is Peptide chain release factor 3 (534 aa).

The tr-type G domain occupies 9–278 (ARRRTFAIIS…FFVEHAPPPQ (270 aa)). Residues 18–25 (SHPDAGKT), 86–90 (DTPGH), and 140–143 (NKLD) contribute to the GTP site.

It belongs to the TRAFAC class translation factor GTPase superfamily. Classic translation factor GTPase family. PrfC subfamily.

Its subcellular location is the cytoplasm. Its function is as follows. Increases the formation of ribosomal termination complexes and stimulates activities of RF-1 and RF-2. It binds guanine nucleotides and has strong preference for UGA stop codons. It may interact directly with the ribosome. The stimulation of RF-1 and RF-2 is significantly reduced by GTP and GDP, but not by GMP. This chain is Peptide chain release factor 3, found in Xanthomonas axonopodis pv. citri (strain 306).